The following is a 44-amino-acid chain: Photosystem I reaction center subunit IX (44 aa).

The helical transmembrane segment at 7–27 (YLSVAPVISTLWFGSLAGLLI) threads the bilayer.

The protein belongs to the PsaJ family.

It localises to the plastid. The protein resides in the chloroplast thylakoid membrane. In terms of biological role, may help in the organization of the PsaE and PsaF subunits. The sequence is that of Photosystem I reaction center subunit IX from Ceratophyllum demersum (Rigid hornwort).